Consider the following 135-residue polypeptide: Rheacalcin-1 (135 aa).

3 disulfide bridges follow: C6–C17, C34–C131, and C106–C123. Positions 13–132 (FRGNCYGYFR…CSERNAFICK (120 aa)) constitute a C-type lectin domain.

It localises to the secreted. The protein resides in the extracellular space. Its subcellular location is the extracellular matrix. The chain is Rheacalcin-1 from Rhea americana (Greater rhea).